The sequence spans 295 residues: MFKSGFVTIVGRPNVGKSTLLNYIMGEKLSIVSNKPQTTRNNIQTILTGDDYQIVFVDTPGIHKPKHKLGEYMVNSAKDSTNDVDLVLFLTNPDEEIGKGDKFILESLKDKKCPVYLVLNKIDESTPERVAKSLEMYSSEFNFKEIVPIAAIKGKNVDTLVDLMKTELPEGPKYYPEDMITDVPERFVVSEIVREKALRCLRDEVPHGIAVDIIQMKQSDNGTYHIEVDLICEKDSHKGIIIGKNGQMLKKIGETSRYELERFLRTKVNVKIWVKVRKEWRDNQNLLKELGYKKK.

The 168-residue stretch at 3–170 (KSGFVTIVGR…VDLMKTELPE (168 aa)) folds into the Era-type G domain. The tract at residues 11–18 (GRPNVGKS) is G1. 11–18 (GRPNVGKS) contributes to the GTP binding site. The G2 stretch occupies residues 37–41 (QTTRN). Residues 58 to 61 (DTPG) form a G3 region. GTP contacts are provided by residues 58 to 62 (DTPGI) and 120 to 123 (NKID). The interval 120 to 123 (NKID) is G4. Residues 149-151 (IAA) form a G5 region. The KH type-2 domain occupies 201 to 278 (LRDEVPHGIA…NVKIWVKVRK (78 aa)).

Belongs to the TRAFAC class TrmE-Era-EngA-EngB-Septin-like GTPase superfamily. Era GTPase family. As to quaternary structure, monomer.

The protein localises to the cytoplasm. It localises to the cell membrane. An essential GTPase that binds both GDP and GTP, with rapid nucleotide exchange. Plays a role in 16S rRNA processing and 30S ribosomal subunit biogenesis and possibly also in cell cycle regulation and energy metabolism. In Clostridium botulinum (strain Alaska E43 / Type E3), this protein is GTPase Era.